Reading from the N-terminus, the 425-residue chain is Type II secretion system protein L (425 aa).

Topologically, residues 1–273 are cytoplasmic; it reads MKIAGKWKRK…DKAWQNTLLP (273 aa). A helical membrane pass occupies residues 274 to 290; sequence WRGVGIAFACYLLLVVA. Residues 291–425 lie on the Periplasmic side of the membrane; that stretch reads DAGWAHYQLY…EGRLTLRSQQ (135 aa).

This sequence belongs to the GSP L family. Type II secretion system is composed of four main components: the outer membrane complex, the inner membrane complex, the cytoplasmic secretion ATPase and the periplasm-spanning pseudopilus. Forms homodimers. Interacts with OutM/GspM. Interacts with OutE/GspE and OutF/GspF.

It is found in the cell inner membrane. Its function is as follows. Inner membrane component of the type II secretion system required for the energy-dependent secretion of extracellular factors such as proteases and toxins from the periplasm. Plays a role in the complex assembly and recruits OutM resulting in a stable complex in the inner membrane. Provides thus a link between the energy-providing OutE protein in the cytoplasm and the rest of the T2SS machinery. In Pectobacterium carotovorum subsp. carotovorum (Erwinia carotovora subsp. carotovora), this protein is Type II secretion system protein L (outL).